The sequence spans 1340 residues: TSET complex member tstE (1340 aa).

A compositionally biased stretch (low complexity) spans 56 to 67 (NQSQTSPNSNDG). 2 disordered regions span residues 56-75 (NQSQ…GSGG) and 110-131 (SGSG…GGGQ). WD repeat units lie at residues 208 to 246 (VNQI…VIGK), 250 to 294 (DPTE…LQTI), 345 to 384 (GHKK…SFLN), and 397 to 436 (IEHS…NPQE). Over residues 1216–1251 (KSHMSSTTTLRRSPSIENIRTTSTTFDSSKFNTDNQ) the composition is skewed to polar residues. A disordered region spans residues 1216 to 1340 (KSHMSSTTTL…TPTPTTTLSS (125 aa)). Positions 1252 to 1275 (ELFDDDSDDDSDSGADADVDSENE) are enriched in acidic residues. Residues 1286-1318 (ASLQHNDNSSLTNITVTDNDSNLDQDITSNTGS) are compositionally biased toward polar residues. Positions 1328–1340 (LSSTPTPTTTLSS) are enriched in low complexity.

Component of the TSET complex, a heterohexamer composed of tstA, tstB, tstC, tstD, tstE and tstF, which may act in plasma membrane turnover. tstA, tstB, tstC and tstD are likely to be the core complex members with tstE and tstF acting as associated scaffold proteins.

This Dictyostelium discoideum (Social amoeba) protein is TSET complex member tstE.